Reading from the N-terminus, the 1701-residue chain is Coiled-coil domain-containing protein 180 (1701 aa).

Residues 1–35 are disordered; that stretch reads MRGGENRPPARVQSSSEELELRHQSLDAFPGRRLP. Positions 171-198 form a coiled coil; that stretch reads QRQAEHKRKSYESALASFQEEIAQVGKE. 3 disordered regions span residues 657-808, 1272-1291, and 1319-1354; these read EKPS…DKEE, HHCDKDPSQTGRGAWACGSR, and GFKRHRCQPENSGKKAVPSASATSAGSFTPHPKPNK. Residues 661-671 are compositionally biased toward basic residues; sequence QKRVKKLRKKQ. The span at 672–682 shows a compositional bias: basic and acidic residues; that stretch reads GSKEDMTRSEE. Residues 683–692 show a composition bias toward polar residues; that stretch reads SISSGTSTAR. Positions 696-705 are enriched in acidic residues; the sequence is EVEEENDQEM. Residues 755-766 show a composition bias toward basic and acidic residues; the sequence is ENVKGQGEKKEE. Residues 757 to 804 adopt a coiled-coil conformation; the sequence is VKGQGEKKEESEEEDEKEEEEEEEKLEEEKEEKEAQEEQESLSVGEEE. The span at 767 to 808 shows a compositional bias: acidic residues; the sequence is SEEEDEKEEEEEEEKLEEEKEEKEAQEEQESLSVGEEEDKEE.

This Homo sapiens (Human) protein is Coiled-coil domain-containing protein 180 (CCDC180).